Reading from the N-terminus, the 307-residue chain is Glycine--tRNA ligase alpha subunit (307 aa).

The protein belongs to the class-II aminoacyl-tRNA synthetase family. In terms of assembly, tetramer of two alpha and two beta subunits.

It localises to the cytoplasm. The enzyme catalyses tRNA(Gly) + glycine + ATP = glycyl-tRNA(Gly) + AMP + diphosphate. This Levilactobacillus brevis (strain ATCC 367 / BCRC 12310 / CIP 105137 / JCM 1170 / LMG 11437 / NCIMB 947 / NCTC 947) (Lactobacillus brevis) protein is Glycine--tRNA ligase alpha subunit.